Consider the following 447-residue polypeptide: Tubulin beta chain (447 aa).

Residues glutamine 11, glutamate 69, serine 138, glycine 142, threonine 143, glycine 144, asparagine 204, and asparagine 226 each coordinate GTP. A Mg(2+)-binding site is contributed by glutamate 69. The segment at 421–447 (EYQQYQDASISEGEEEYEEEAPMEPEE) is disordered. Positions 432–447 (EGEEEYEEEAPMEPEE) are enriched in acidic residues.

This sequence belongs to the tubulin family. Dimer of alpha and beta chains. A typical microtubule is a hollow water-filled tube with an outer diameter of 25 nm and an inner diameter of 15 nM. Alpha-beta heterodimers associate head-to-tail to form protofilaments running lengthwise along the microtubule wall with the beta-tubulin subunit facing the microtubule plus end conferring a structural polarity. Microtubules usually have 13 protofilaments but different protofilament numbers can be found in some organisms and specialized cells. Mg(2+) is required as a cofactor.

The protein resides in the cytoplasm. It is found in the cytoskeleton. Its function is as follows. Tubulin is the major constituent of microtubules, a cylinder consisting of laterally associated linear protofilaments composed of alpha- and beta-tubulin heterodimers. Microtubules grow by the addition of GTP-tubulin dimers to the microtubule end, where a stabilizing cap forms. Below the cap, tubulin dimers are in GDP-bound state, owing to GTPase activity of alpha-tubulin. This chain is Tubulin beta chain, found in Rhynchosporium secalis (Barley scald fungus).